We begin with the raw amino-acid sequence, 303 residues long: Putative CRISPR-associated endonuclease Cas1 2 (303 aa).

E149 lines the Mn(2+) pocket.

It belongs to the CRISPR-associated endonuclease Cas1 family. Homodimer, forms a heterotetramer with a Cas2 homodimer. Mg(2+) is required as a cofactor. The cofactor is Mn(2+).

CRISPR (clustered regularly interspaced short palindromic repeat), is an adaptive immune system that provides protection against mobile genetic elements (viruses, transposable elements and conjugative plasmids). CRISPR clusters contain sequences complementary to antecedent mobile elements and target invading nucleic acids. CRISPR clusters are transcribed and processed into CRISPR RNA (crRNA). Acts as a dsDNA endonuclease. Involved in the integration of spacer DNA into the CRISPR cassette. The polypeptide is Putative CRISPR-associated endonuclease Cas1 2 (Methanospirillum hungatei JF-1 (strain ATCC 27890 / DSM 864 / NBRC 100397 / JF-1)).